A 67-amino-acid chain; its full sequence is Penaeidin-4d (67 aa).

The first 19 residues, 1 to 19 (MRLLVCLVFLASFAMVCQG), serve as a signal peptide directing secretion. Disulfide bonds link C42–C56, C45–C63, and C57–C64. Position 66 is a leucine amide (L66).

This sequence belongs to the penaeidin family.

It localises to the cytoplasmic granule. Antibacterial and antifungal activity. Presents chitin-binding activity. The protein is Penaeidin-4d of Penaeus setiferus (Atlantic white shrimp).